The following is a 365-amino-acid chain: Putative DNA-directed RNA polymerase subunit alpha-like 3 (365 aa).

The protein belongs to the RNA polymerase alpha chain family. In plastids the minimal PEP RNA polymerase catalytic core is composed of four subunits: alpha, beta, beta', and beta''. When a (nuclear-encoded) sigma factor is associated with the core the holoenzyme is formed, which can initiate transcription.

It localises to the plastid. The protein localises to the chloroplast. The catalysed reaction is RNA(n) + a ribonucleoside 5'-triphosphate = RNA(n+1) + diphosphate. Its function is as follows. DNA-dependent RNA polymerase catalyzes the transcription of DNA into RNA using the four ribonucleoside triphosphates as substrates. In Pelargonium hortorum (Common geranium), this protein is Putative DNA-directed RNA polymerase subunit alpha-like 3 (rpoAL3-A).